A 476-amino-acid chain; its full sequence is Glutamate--tRNA ligase (476 aa).

The 'HIGH' region motif lies at 9–19; sequence PSPTGTLHLGT. Positions 248-252 match the 'KMSKS' region motif; it reads KLSKR. Lys-251 provides a ligand contact to ATP.

This sequence belongs to the class-I aminoacyl-tRNA synthetase family. Glutamate--tRNA ligase type 1 subfamily. Monomer.

The protein resides in the cytoplasm. The catalysed reaction is tRNA(Glu) + L-glutamate + ATP = L-glutamyl-tRNA(Glu) + AMP + diphosphate. In terms of biological role, catalyzes the attachment of glutamate to tRNA(Glu) in a two-step reaction: glutamate is first activated by ATP to form Glu-AMP and then transferred to the acceptor end of tRNA(Glu). The sequence is that of Glutamate--tRNA ligase from Prochlorococcus marinus (strain NATL1A).